A 280-amino-acid polypeptide reads, in one-letter code: Probable cell division protein WhiA (280 aa).

The segment at residues 246–279 (SLEQIAQFFERKYKVQITRSGIQHLNAKLKKLNQ) is a DNA-binding region (H-T-H motif).

Belongs to the WhiA family.

In terms of biological role, involved in cell division and chromosome segregation. The polypeptide is Probable cell division protein WhiA (Mycoplasma pneumoniae (strain ATCC 29342 / M129 / Subtype 1) (Mycoplasmoides pneumoniae)).